The chain runs to 425 residues: tRNA(Ile)-lysidine synthase (425 aa).

27-32 (SGGLDS) contacts ATP.

This sequence belongs to the tRNA(Ile)-lysidine synthase family.

Its subcellular location is the cytoplasm. The catalysed reaction is cytidine(34) in tRNA(Ile2) + L-lysine + ATP = lysidine(34) in tRNA(Ile2) + AMP + diphosphate + H(+). Ligates lysine onto the cytidine present at position 34 of the AUA codon-specific tRNA(Ile) that contains the anticodon CAU, in an ATP-dependent manner. Cytidine is converted to lysidine, thus changing the amino acid specificity of the tRNA from methionine to isoleucine. This is tRNA(Ile)-lysidine synthase from Streptococcus pneumoniae serotype 19F (strain G54).